Consider the following 380-residue polypeptide: Endo-chitosanase C (380 aa).

Positions 1–22 (MPIKSFASRLALSLAICGTAMG) are cleaved as a signal peptide. The stretch at 276–304 (CSWPGHCAGATCSSNDDCSDDLTCQNGKC) is one R3-1 repeat. An R3-2 repeat occupies 311–341 (ETCSWEGHCKGATCSSNDDCSDELACISGIC). Residues 348–378 (ETCEWEGHCEGASCSSHDDCDGNLACKNGKC) form an R3-3 repeat.

It belongs to the glycosyl hydrolase 75 family.

Its subcellular location is the secreted. The enzyme catalyses Endohydrolysis of beta-(1-&gt;4)-linkages between D-glucosamine residues in a partly acetylated chitosan.. Functionally, chitosanase catalyzing the endo-type cleavage of chitosan, the deacylated form of chitin. Chitosanase may be crucial in the degradation of the deacetylated portion of chitin in the fungal cell wall. Chitoolisaccharides produced by the hydrolysis of partially N-acetylated chitosan are known to have many biological activities, including antibacterial activity, immune-enhancing effects, and elicitor activity. This Aspergillus oryzae (Yellow koji mold) protein is Endo-chitosanase C (csnC).